The chain runs to 832 residues: Protein PPP4R3C (832 aa).

Positions 708-832 (RTQEGEAVMP…SPKKKPHLSS (125 aa)) are disordered. 2 stretches are compositionally biased toward basic and acidic residues: residues 725 to 735 (FTETKRTHQEG) and 749 to 765 (METK…DSPK). The span at 769–779 (SGDFKFSSSYS) shows a compositional bias: low complexity. A compositionally biased stretch (acidic residues) spans 801-820 (PDDEEEKEEDEEEKEEDKED).

The protein belongs to the SMEK family.

This Homo sapiens (Human) protein is Protein PPP4R3C.